A 408-amino-acid polypeptide reads, in one-letter code: Protein BTN1 (408 aa).

The first 30 residues, 1-30, serve as a signal peptide directing secretion; the sequence is MSDKSHQIYCYFWLFGLINNVLYVVILSAA. 7 helical membrane passes run 42–62, 80–100, 128–148, 150–170, 238–258, 323–343, and 369–389; these read LVLL…PFFI, LGMF…ISFA, SGTG…TSIF, VPVK…LFYF, TVYL…LFPI, WFYV…EGFL, and GAVS…GLGL.

This sequence belongs to the battenin family.

The protein resides in the vacuole membrane. Functionally, plays a role in vacuolar arginine transport. Involved in pH homeostasis. May be involved in ion homeostasis together with IST2. Not necessary for mitochondrial function or ATP synthase degradation. The polypeptide is Protein BTN1 (YHC3) (Saccharomyces cerevisiae (strain ATCC 204508 / S288c) (Baker's yeast)).